We begin with the raw amino-acid sequence, 472 residues long: Exodeoxyribonuclease 7 large subunit (472 aa).

The protein belongs to the XseA family. As to quaternary structure, heterooligomer composed of large and small subunits.

It is found in the cytoplasm. The catalysed reaction is Exonucleolytic cleavage in either 5'- to 3'- or 3'- to 5'-direction to yield nucleoside 5'-phosphates.. In terms of biological role, bidirectionally degrades single-stranded DNA into large acid-insoluble oligonucleotides, which are then degraded further into small acid-soluble oligonucleotides. The polypeptide is Exodeoxyribonuclease 7 large subunit (Carboxydothermus hydrogenoformans (strain ATCC BAA-161 / DSM 6008 / Z-2901)).